Reading from the N-terminus, the 506-residue chain is Ribose import ATP-binding protein RbsA 2 (506 aa).

ABC transporter domains are found at residues Leu5–Arg241 and Ala254–Thr498. Gly37–Ser44 provides a ligand contact to ATP.

Belongs to the ABC transporter superfamily. Ribose importer (TC 3.A.1.2.1) family. The complex is composed of an ATP-binding protein (RbsA), two transmembrane proteins (RbsC) and a solute-binding protein (RbsB).

It localises to the cell inner membrane. The catalysed reaction is D-ribose(out) + ATP + H2O = D-ribose(in) + ADP + phosphate + H(+). Part of the ABC transporter complex RbsABC involved in ribose import. Responsible for energy coupling to the transport system. This is Ribose import ATP-binding protein RbsA 2 from Burkholderia cenocepacia (strain HI2424).